The chain runs to 146 residues: D-aminoacyl-tRNA deacylase (146 aa).

A Gly-cisPro motif, important for rejection of L-amino acids motif is present at residues 137–138; it reads GP.

The protein belongs to the DTD family. In terms of assembly, homodimer.

It localises to the cytoplasm. The enzyme catalyses glycyl-tRNA(Ala) + H2O = tRNA(Ala) + glycine + H(+). It catalyses the reaction a D-aminoacyl-tRNA + H2O = a tRNA + a D-alpha-amino acid + H(+). In terms of biological role, an aminoacyl-tRNA editing enzyme that deacylates mischarged D-aminoacyl-tRNAs. Also deacylates mischarged glycyl-tRNA(Ala), protecting cells against glycine mischarging by AlaRS. Acts via tRNA-based rather than protein-based catalysis; rejects L-amino acids rather than detecting D-amino acids in the active site. By recycling D-aminoacyl-tRNA to D-amino acids and free tRNA molecules, this enzyme counteracts the toxicity associated with the formation of D-aminoacyl-tRNA entities in vivo and helps enforce protein L-homochirality. The protein is D-aminoacyl-tRNA deacylase of Thermodesulfovibrio yellowstonii (strain ATCC 51303 / DSM 11347 / YP87).